The chain runs to 465 residues: Na(+)-translocating NADH-quinone reductase subunit A (465 aa).

This sequence belongs to the NqrA family. In terms of assembly, composed of six subunits; NqrA, NqrB, NqrC, NqrD, NqrE and NqrF.

It catalyses the reaction a ubiquinone + n Na(+)(in) + NADH + H(+) = a ubiquinol + n Na(+)(out) + NAD(+). In terms of biological role, NQR complex catalyzes the reduction of ubiquinone-1 to ubiquinol by two successive reactions, coupled with the transport of Na(+) ions from the cytoplasm to the periplasm. NqrA to NqrE are probably involved in the second step, the conversion of ubisemiquinone to ubiquinol. This is Na(+)-translocating NADH-quinone reductase subunit A from Chlamydia trachomatis serovar A (strain ATCC VR-571B / DSM 19440 / HAR-13).